A 500-amino-acid chain; its full sequence is 4-aminobutyrate aminotransferase, mitochondrial (500 aa).

Residues 1-28 (MASMLLAQRLACSFQHSYRLLVPGSRHI) constitute a mitochondrion transit peptide. A [2Fe-2S] cluster-binding site is contributed by C163. 164–165 (GS) contributes to the pyridoxal 5'-phosphate binding site. C166 provides a ligand contact to [2Fe-2S] cluster. Residue R220 coordinates substrate. K231 carries the post-translational modification N6-succinyllysine. Residue K252 is modified to N6-acetyllysine; alternate. K252 is modified (N6-succinyllysine; alternate). N6-acetyllysine occurs at positions 279 and 318. K357 carries the N6-(pyridoxal phosphate)lysine modification. T381 contacts pyridoxal 5'-phosphate. The residue at position 413 (K413) is an N6-acetyllysine; alternate. Residue K413 is modified to N6-succinyllysine; alternate. An N6-acetyllysine mark is found at K452 and K470.

It belongs to the class-III pyridoxal-phosphate-dependent aminotransferase family. In terms of assembly, homodimer; disulfide-linked. Requires pyridoxal 5'-phosphate as cofactor. It depends on [2Fe-2S] cluster as a cofactor. Liver &gt; pancreas &gt; brain &gt; kidney &gt; heart &gt; placenta.

The protein localises to the mitochondrion matrix. It catalyses the reaction 4-aminobutanoate + 2-oxoglutarate = succinate semialdehyde + L-glutamate. It carries out the reaction (S)-3-amino-2-methylpropanoate + 2-oxoglutarate = 2-methyl-3-oxopropanoate + L-glutamate. Its function is as follows. Catalyzes the conversion of gamma-aminobutyrate and L-beta-aminoisobutyrate to succinate semialdehyde and methylmalonate semialdehyde, respectively. Can also convert delta-aminovalerate and beta-alanine. The polypeptide is 4-aminobutyrate aminotransferase, mitochondrial (Homo sapiens (Human)).